The sequence spans 301 residues: Ribonuclease Z (301 aa).

Residues histidine 61, histidine 63, aspartate 65, histidine 66, histidine 140, aspartate 211, and histidine 269 each coordinate Zn(2+). Catalysis depends on aspartate 65, which acts as the Proton acceptor.

This sequence belongs to the RNase Z family. Homodimer. Requires Zn(2+) as cofactor.

The catalysed reaction is Endonucleolytic cleavage of RNA, removing extra 3' nucleotides from tRNA precursor, generating 3' termini of tRNAs. A 3'-hydroxy group is left at the tRNA terminus and a 5'-phosphoryl group is left at the trailer molecule.. Functionally, zinc phosphodiesterase, which displays some tRNA 3'-processing endonuclease activity. Probably involved in tRNA maturation, by removing a 3'-trailer from precursor tRNA. The sequence is that of Ribonuclease Z from Bradyrhizobium diazoefficiens (strain JCM 10833 / BCRC 13528 / IAM 13628 / NBRC 14792 / USDA 110).